The chain runs to 739 residues: Ankyrin repeat and SAM domain-containing protein 6 (739 aa).

ANK repeat units follow at residues Met-1–Asp-30, Leu-57–Val-86, Thr-91–His-120, Leu-124–Asp-156, Lys-158–Val-188, Asp-192–Arg-221, His-226–Leu-255, and Asn-259–Lys-290. The span at Gln-295 to Ala-305 shows a compositional bias: basic residues. Disordered regions lie at residues Gln-295 to Lys-320 and Leu-449 to Glu-645. The span at Pro-462 to Val-478 shows a compositional bias: polar residues. Composition is skewed to low complexity over residues Gly-490–Gly-506 and Ser-582–Leu-592. Residues Thr-593–Thr-603 show a composition bias toward pro residues. Low complexity predominate over residues Pro-604 to Thr-641. An SAM domain is found at Thr-643 to Gly-706.

The protein localises to the cell projection. It localises to the cilium. Its function is as follows. Required for renal function. In Danio rerio (Zebrafish), this protein is Ankyrin repeat and SAM domain-containing protein 6 (anks6).